The chain runs to 380 residues: MPIKSFASRLALSLAICGTAMGQKVNGADYNKPDGGPPAKFFQASSSIPVAAIQAAAAKASKVPSHATYPIGQGSTKSTIHSDWAGFSEGAAFSFIADMDVDCDGLNHGCKGNPDGQKETNWGALSAYEVPFIVIPQEFLDANKGTLKGNAVAAVICNGKMFYGIFGDSNGDSPQVTGEASWLMARTCFPKEDLNGNKGHTAADVTYIVFTGDKAVLPSSALNKNYITNFDTLRSMGDSLVGALAKNLNLGGGGGNPPTTLTTTSIPEPTGGSGSCSWPGHCAGATCSSNDDCSDDLTCQNGKCASDGSAETCSWEGHCKGATCSSNDDCSDELACISGICSVDNGVETCEWEGHCEGASCSSHDDCDGNLACKNGKCSA.

A signal peptide spans 1–22; it reads MPIKSFASRLALSLAICGTAMG. Residues 276–304 form an R3-1 repeat; it reads CSWPGHCAGATCSSNDDCSDDLTCQNGKC. An R3-2 repeat occupies 311–341; it reads ETCSWEGHCKGATCSSNDDCSDELACISGIC. One copy of the R3-3 repeat lies at 348–378; the sequence is ETCEWEGHCEGASCSSHDDCDGNLACKNGKC.

Belongs to the glycosyl hydrolase 75 family.

The protein localises to the secreted. It catalyses the reaction Endohydrolysis of beta-(1-&gt;4)-linkages between D-glucosamine residues in a partly acetylated chitosan.. Functionally, chitosanase catalyzing the endo-type cleavage of chitosan, the deacylated form of chitin. Chitosanase may be crucial in the degradation of the deacetylated portion of chitin in the fungal cell wall. Chitoolisaccharides produced by the hydrolysis of partially N-acetylated chitosan are known to have many biological activities, including antibacterial activity, immune-enhancing effects, and elicitor activity. The polypeptide is Endo-chitosanase C (csnC) (Aspergillus oryzae (Yellow koji mold)).